The primary structure comprises 296 residues: ATP synthase gamma chain (296 aa).

The protein belongs to the ATPase gamma chain family. As to quaternary structure, F-type ATPases have 2 components, CF(1) - the catalytic core - and CF(0) - the membrane proton channel. CF(1) has five subunits: alpha(3), beta(3), gamma(1), delta(1), epsilon(1). CF(0) has three main subunits: a, b and c.

Its subcellular location is the cell inner membrane. In terms of biological role, produces ATP from ADP in the presence of a proton gradient across the membrane. The gamma chain is believed to be important in regulating ATPase activity and the flow of protons through the CF(0) complex. The sequence is that of ATP synthase gamma chain from Gluconobacter oxydans (strain 621H) (Gluconobacter suboxydans).